A 447-amino-acid polypeptide reads, in one-letter code: MTSRKYFGTDGIRGRVGQFPITPEFMLKLGWAAGMAFRKMGACRILVGKDTRISGYMFESALEAGLSAAGADVLLLGPMPTPAIAYLTRTFHAEAGIVISASHNPHYDNGIKFFSGQGTKLPDEIEMMIEELLDAPMTVAESENLGKVSRINDAAGRYIEFCKSSVPTSTDFAGLKVVIDCAHGATYKVAPNVFRELGAQVVVLSAQPDGLNINKDCGSTHMEALQAAVLAEHADMGIGFDGDGDRVLMVDHTGTIVDGDELLYIIARDLHERGRLQGGVVGTLMSNLGLELALAEQGIPFVRANVGDRYVIAELLERNWQIGGENSGHIVCFQHATTGDAIIASLQVILALRRSGVSLAEARLKLRKCPQILINVRFAGSGVDPVSHPSVKEACARVTEQMAGRGRVLLRKSGTEPLVRVMVEGEDETQVRAYAEELAKLVTEVCA.

The active-site Phosphoserine intermediate is S102. Positions 102, 241, 243, and 245 each coordinate Mg(2+). S102 carries the phosphoserine modification.

Belongs to the phosphohexose mutase family. Requires Mg(2+) as cofactor. Post-translationally, activated by phosphorylation.

The enzyme catalyses alpha-D-glucosamine 1-phosphate = D-glucosamine 6-phosphate. Catalyzes the conversion of glucosamine-6-phosphate to glucosamine-1-phosphate. In Pseudomonas syringae pv. syringae (strain B728a), this protein is Phosphoglucosamine mutase.